The primary structure comprises 293 residues: MKILFSTIIGRPNVGKSTLLNNILEYDLAIVSSKPQATRDQIMGIYSDDDYQLIFTDTPGIYKTKTKFGENLNAQSYESLKDIDLVIFLSPANEEIGPGDEFICEKIKNFTNKIALITKIDLENSEEVLKKKAEKLKSLGFKEIFAISSKDHGSIKKLINEIKKYSYEGERQFDEDMITEKSEKFIAKESIREACIDLLEQELPHSILVEIDSFSEEEREEKNLVEIHSTIYVNKESQKGILIGKGGSKIKKIGISARKKIQRKLGVNVKLFLKIKVKKNWVNQEKIFKKFDN.

In terms of domain architecture, Era-type G spans 2–168 (KILFSTIIGR…INEIKKYSYE (167 aa)). A G1 region spans residues 10 to 17 (GRPNVGKS). 10-17 (GRPNVGKS) contacts GTP. The tract at residues 36–40 (QATRD) is G2. The G3 stretch occupies residues 57 to 60 (DTPG). GTP contacts are provided by residues 57-61 (DTPGI) and 118-121 (TKID). The tract at residues 118-121 (TKID) is G4. Residues 147-149 (ISS) are G5. Positions 199–279 (LEQELPHSIL…KLFLKIKVKK (81 aa)) constitute a KH type-2 domain.

The protein belongs to the TRAFAC class TrmE-Era-EngA-EngB-Septin-like GTPase superfamily. Era GTPase family. As to quaternary structure, monomer.

The protein resides in the cytoplasm. It is found in the cell membrane. Functionally, an essential GTPase that binds both GDP and GTP, with rapid nucleotide exchange. Plays a role in 16S rRNA processing and 30S ribosomal subunit biogenesis and possibly also in cell cycle regulation and energy metabolism. This Mycoplasmopsis pulmonis (strain UAB CTIP) (Mycoplasma pulmonis) protein is GTPase Era.